We begin with the raw amino-acid sequence, 608 residues long: Bifunctional dihydrofolate reductase-thymidylate synthase (608 aa).

The 219-residue stretch at 10–228 folds into the DHFR domain; the sequence is DIYAICACCK…TTLDFIIYKK (219 aa). 14–15 is a substrate binding site; the sequence is IC. An NADP(+)-binding site is contributed by alanine 16. Residue valine 31 coordinates substrate. 39-45 contacts NADP(+); the sequence is GLGNKGV. Substrate-binding residues include aspartate 54 and asparagine 108. NADP(+)-binding positions include 106–108, 128–130, and asparagine 144; these read RTN and SRT. 3 residues coordinate substrate: isoleucine 164, tyrosine 170, and threonine 185. 165 to 172 contributes to the NADP(+) binding site; it reads GGSVVYQE. A thymidylate synthase region spans residues 322 to 608; it reads YHPEYQYLNI…HEKISMDMAA (287 aa). Residue arginine 345 participates in dUMP binding. The active site involves cysteine 490. DUMP contacts are provided by residues histidine 491, 509-513, asparagine 521, and 551-553; these read QRSCD and HVY.

In the N-terminal section; belongs to the dihydrofolate reductase family. It in the C-terminal section; belongs to the thymidylate synthase family. In terms of assembly, homodimer.

It carries out the reaction (6S)-5,6,7,8-tetrahydrofolate + NADP(+) = 7,8-dihydrofolate + NADPH + H(+). The catalysed reaction is dUMP + (6R)-5,10-methylene-5,6,7,8-tetrahydrofolate = 7,8-dihydrofolate + dTMP. The protein operates within cofactor biosynthesis; tetrahydrofolate biosynthesis; 5,6,7,8-tetrahydrofolate from 7,8-dihydrofolate: step 1/1. Bifunctional enzyme. Involved in de novo dTMP biosynthesis. Key enzyme in folate metabolism. Catalyzes an essential reaction for de novo glycine and purine synthesis, DNA precursor synthesis, and for the conversion of dUMP to dTMP. The sequence is that of Bifunctional dihydrofolate reductase-thymidylate synthase from Plasmodium falciparum (isolate K1 / Thailand).